Consider the following 1181-residue polypeptide: C5a peptidase (1181 aa).

A signal peptide spans 1 to 31 (MRKKQKLPFDKLAIALMSTSILLNAQSDIKA). A compositionally biased stretch (polar residues) spans 33–52 (TVTEDTPATEQAVETPQPTA). A disordered region spans residues 33 to 117 (TVTEDTPATE…PSQVKTLQEK (85 aa)). Over residues 70 to 81 (DDAEETIADDAN) the composition is skewed to acidic residues. Residues 99–581 (KATIRDLNDP…AGAVDAKKAS (483 aa)) form the Peptidase S8 domain. Catalysis depends on charge relay system residues Asp130, His193, and Ser512. Composition is skewed to basic and acidic residues over residues 1029–1054 (EGHS…KPEQ), 1061–1071 (PDKKPETKPEQ), 1078–1088 (PDKKPETKPEQ), and 1095–1107 (PDKK…EKDS). The segment at 1029–1150 (EGHSNKPEQD…KDQLPTTNDK (122 aa)) is disordered. 5 repeat units span residues 1034–1050 (KPEQ…KPET), 1051–1067 (KPEQ…KPET), 1068–1084 (KPEQ…KPET), 1085–1101 (KPEQ…KPET), and 1102–1118 (KPEK…TPQK). The tract at residues 1034–1118 (KPEQDGSDQA…GQTPGKTPQK (85 aa)) is 5 X 17 AA tandem repeats. Composition is skewed to polar residues over residues 1109–1123 (GQTP…QPSR) and 1137–1147 (KASTKDQLPTT). An LPXTG sorting signal motif is present at residues 1144–1148 (LPTTN). Position 1147 is a pentaglycyl murein peptidoglycan amidated threonine (Thr1147). A propeptide spans 1148-1181 (NDKDTNRLHLLKLVMTTFFLGLVAHIFKTKRTED) (removed by sortase).

The protein belongs to the peptidase S8 family. In terms of processing, cleaved by SpeB protease; leading to its degradation. Degradation by SpeB is probably strictly regulated to preserve integrity of C5a peptidase.

It localises to the secreted. The protein localises to the cell wall. The enzyme catalyses The primary cleavage site is at 67-His-|-Lys-68 in human C5a with a minor secondary cleavage site at 58-Ala-|-Ser-59.. Functionally, this virulence factor of S.pyogenes specifically cleaves the human serum chemotaxin C5a at '68-Lys-|-Asp-69' bond near its C-terminus, destroying its ability to serve as a chemoattractant. The chain is C5a peptidase (scpA) from Streptococcus pyogenes serotype M1.